The sequence spans 139 residues: Nuclear receptor 2C2-associated protein (139 aa).

It belongs to the NR2C2AP family. As to quaternary structure, interacts with NR2C2/TR4. As to expression, expressed in all tissues examined, with highest expression in heart, skeletal muscle and pancreas.

The protein resides in the nucleus. Its function is as follows. May act as a repressor of NR2C2-mediated transactivation by suppressing the binding between NR2C2/TR4 and the TR4-response element in target genes. The polypeptide is Nuclear receptor 2C2-associated protein (NR2C2AP) (Homo sapiens (Human)).